Here is a 356-residue protein sequence, read N- to C-terminus: Probable arabinogalactan endo-beta-1,4-galactanase A (356 aa).

An N-terminal signal peptide occupies residues 1 to 21; it reads MLGKMILLPLFVLLCHSLASA. An N-linked (GlcNAc...) asparagine glycan is attached at Asn133. Glu157 (proton donor) is an active-site residue. Glu268 functions as the Nucleophile in the catalytic mechanism.

It belongs to the glycosyl hydrolase 53 family.

Its subcellular location is the secreted. The catalysed reaction is The enzyme specifically hydrolyzes (1-&gt;4)-beta-D-galactosidic linkages in type I arabinogalactans.. Endogalactanase involved in the degradation of plant cell wall polysaccharides, and more particularly of hairy regions of pectin. This Neosartorya fischeri (strain ATCC 1020 / DSM 3700 / CBS 544.65 / FGSC A1164 / JCM 1740 / NRRL 181 / WB 181) (Aspergillus fischerianus) protein is Probable arabinogalactan endo-beta-1,4-galactanase A (galA).